The sequence spans 338 residues: S-adenosylmethionine:tRNA ribosyltransferase-isomerase (338 aa).

It belongs to the QueA family. Monomer.

It is found in the cytoplasm. It carries out the reaction 7-aminomethyl-7-carbaguanosine(34) in tRNA + S-adenosyl-L-methionine = epoxyqueuosine(34) in tRNA + adenine + L-methionine + 2 H(+). The protein operates within tRNA modification; tRNA-queuosine biosynthesis. Functionally, transfers and isomerizes the ribose moiety from AdoMet to the 7-aminomethyl group of 7-deazaguanine (preQ1-tRNA) to give epoxyqueuosine (oQ-tRNA). This is S-adenosylmethionine:tRNA ribosyltransferase-isomerase from Francisella tularensis subsp. tularensis (strain WY96-3418).